Here is a 319-residue protein sequence, read N- to C-terminus: 12-(S)-hydroxy-5,8,10,14-eicosatetraenoic acid receptor (319 aa).

Topologically, residues 1 to 16 are extracellular; sequence MPFPNCSAPSTVVATA. A glycan (N-linked (GlcNAc...) asparagine) is linked at asparagine 5. A helical transmembrane segment spans residues 17–37; that stretch reads VGVLLGLECGLGLLGNAVALW. Residues 38 to 52 are Cytoplasmic-facing; the sequence is TFLFRVRVWKPYAVY. Residues 53–73 traverse the membrane as a helical segment; it reads LLNLALADLLLAACLPFLAAF. The Extracellular segment spans residues 74-91; it reads YLSLQAWHLGRVGCWALH. Residues 92 to 110 traverse the membrane as a helical segment; it reads FLLDLSRSVGMAFLAAVAL. Residues 111–131 lie on the Cytoplasmic side of the membrane; sequence DRYLRVVHPRLKVNLLSPQAA. The chain crosses the membrane as a helical span at residues 132-152; it reads LGVSGLVWLLMVALTCPGLLI. Residues 153–180 are Extracellular-facing; it reads SEAAQNSTRCHSFYSRADGSFSIIWQEA. The chain crosses the membrane as a helical span at residues 181–201; the sequence is LSCLQFVLPFGLIVFCNAGII. Residues 202-219 lie on the Cytoplasmic side of the membrane; that stretch reads RALQKRLREPEKQPKLQR. Residues 220–240 traverse the membrane as a helical segment; that stretch reads AQALVTLVVVLFALCFLPCFL. Residues 241 to 265 are Extracellular-facing; that stretch reads ARVLMHIFQNLGSCRALCAVAHTSD. A helical transmembrane segment spans residues 266-284; sequence VTGSLTYLHSVLNPVVYCF. The Cytoplasmic portion of the chain corresponds to 285 to 319; sequence SSPTFRSSYRRVFHTLRGKGQAAEPPDFNPRDSYS.

The protein belongs to the G-protein coupled receptor 1 family. As to quaternary structure, interacts with KRAS; in a farnesylation-dependent manner.

It is found in the cell membrane. In terms of biological role, high-affinity receptor for 12-(S)-hydroxy-5,8,10,14-eicosatetraenoic acid (12-S-HETE), with much lower affinities for other HETE isomers. 12-S-HETE is a eicosanoid, a 12-lipoxygenase (ALOX12) metabolite of arachidonic acid, involved in many physiologic and pathologic processes. 12-S-HETE-binding leads to activation of ERK1/2 (MAPK3/MAPK1), MEK, and NF-kappa-B pathways leading to cell growth. Plays a crucial role for proliferation, survival and macropinocytosis of KRAS-dependent cancer cells by mediating the translocation of KRAS from the endoplasmic reticulum to the plasma membrane (PM) and its association with the PM. Contributes to enhanced immune responses by inducing dendrite protrusion of small intestinal CX3CR1(+) phagocytes for the uptake of luminal antigens. Acts also as a key receptor for 12-(S)-HETE-mediated liver ischemia reperfusion injury. Proton-sensing G protein-coupled receptor. In Homo sapiens (Human), this protein is 12-(S)-hydroxy-5,8,10,14-eicosatetraenoic acid receptor (GPR31).